Reading from the N-terminus, the 105-residue chain is U-scoloptoxin(10)-Sm3a (105 aa).

A signal peptide spans Met-1–Thr-23.

This sequence belongs to the scoloptoxin-10 family. Post-translationally, contains 3 disulfide bonds. In terms of tissue distribution, expressed by the venom gland.

The protein localises to the secreted. The sequence is that of U-scoloptoxin(10)-Sm3a from Scolopendra morsitans (Tanzanian blue ringleg centipede).